A 520-amino-acid polypeptide reads, in one-letter code: Flavin-dependent halogenase radH (520 aa).

FAD is bound by residues Gly-14, Ala-17, and Glu-47. Chloride contacts are provided by Ser-330 and Gly-331.

Belongs to the flavin-dependent halogenase family.

Its pathway is secondary metabolite biosynthesis. In terms of biological role, non-heme halogenase; part of the gene cluster that mediates the biosynthesis of radicicol, a resorcylic acid lactone (RAL) that irreversibly inhibits the HSP90 molecular chaperone, an important target for cancer chemotherapy. The cluster encodes only two apparent post-PKS enzymes, a cytochrome P450 monooxygenase (radP) and a non-heme halogenase (radH) that introduce the epoxide and the chlorine, respectively. If this cluster includes all the genes required for radicicol biosynthesis, the remaining structural features of radicicol are presumably generated by the PKSs rads1 and rads2. The C-2' ketone could arise if the R-PKS rads1 and NR-PKS rads2 each carry out four iterations, in contrast to the five iteration-three iteration split for the hypothemycin PKSs. The origin of the cis 5',6' double bond is not known. The radicicol R-PKS rads1 ER domain may catalyze either double bond isomerization or reduction in the third iteration. This chain is Flavin-dependent halogenase radH, found in Floropilus chiversii (Chaetomium chiversii).